We begin with the raw amino-acid sequence, 63 residues long: Large ribosomal subunit protein bL28 (63 aa).

This sequence belongs to the bacterial ribosomal protein bL28 family.

The protein is Large ribosomal subunit protein bL28 of Alkaliphilus oremlandii (strain OhILAs) (Clostridium oremlandii (strain OhILAs)).